The primary structure comprises 170 residues: Myelin-associated oligodendrocyte basic protein (170 aa).

A disordered region spans residues Ser-69 to Trp-170. Residues Pro-82–Pro-92 show a composition bias toward low complexity. Phosphoserine occurs at positions 85, 98, and 107. Copy 1 of the repeat occupies Pro-93–Arg-101. Over residues Pro-93–Pro-114 the composition is skewed to pro residues. Residues Pro-93 to Arg-119 form a 3 X 9 AA approximate tandem repeats region. One copy of the 2; half-length repeat lies at Pro-105–Ile-110. Repeat 3 spans residues Pro-111 to Arg-119. Residues Ser-118 to Val-130 are compositionally biased toward basic and acidic residues. Residues Lys-138 to Pro-151 show a composition bias toward low complexity.

Expressed predominantly in oligodendrocytes, in CNS myelin of the cerebrum and spinal cord. No expression seen in sciatic nerve.

It localises to the cytoplasm. Its subcellular location is the perinuclear region. Its function is as follows. May play a role in compacting or stabilizing the myelin sheath, possibly by binding the negatively charged acidic phospholipids of the cytoplasmic membrane. This is Myelin-associated oligodendrocyte basic protein (Mobp) from Rattus norvegicus (Rat).